A 95-amino-acid chain; its full sequence is Small ribosomal subunit protein bS18 (95 aa).

The protein belongs to the bacterial ribosomal protein bS18 family. In terms of assembly, part of the 30S ribosomal subunit. Forms a tight heterodimer with protein bS6.

Binds as a heterodimer with protein bS6 to the central domain of the 16S rRNA, where it helps stabilize the platform of the 30S subunit. The protein is Small ribosomal subunit protein bS18 of Ehrlichia canis (strain Jake).